A 141-amino-acid chain; its full sequence is Large ribosomal subunit protein uL11 (141 aa).

Belongs to the universal ribosomal protein uL11 family. In terms of assembly, part of the ribosomal stalk of the 50S ribosomal subunit. Interacts with L10 and the large rRNA to form the base of the stalk. L10 forms an elongated spine to which L12 dimers bind in a sequential fashion forming a multimeric L10(L12)X complex. Post-translationally, one or more lysine residues are methylated.

Functionally, forms part of the ribosomal stalk which helps the ribosome interact with GTP-bound translation factors. This is Large ribosomal subunit protein uL11 from Roseiflexus sp. (strain RS-1).